Here is a 324-residue protein sequence, read N- to C-terminus: Beta-ketoacyl-[acyl-carrier-protein] synthase III (324 aa).

Catalysis depends on residues cysteine 114 and histidine 251. Residues glutamine 252–arginine 256 form an ACP-binding region. Asparagine 281 is a catalytic residue.

The protein belongs to the thiolase-like superfamily. FabH family. As to quaternary structure, homodimer.

The protein localises to the cytoplasm. It carries out the reaction malonyl-[ACP] + acetyl-CoA + H(+) = 3-oxobutanoyl-[ACP] + CO2 + CoA. The protein operates within lipid metabolism; fatty acid biosynthesis. In terms of biological role, catalyzes the condensation reaction of fatty acid synthesis by the addition to an acyl acceptor of two carbons from malonyl-ACP. Catalyzes the first condensation reaction which initiates fatty acid synthesis and may therefore play a role in governing the total rate of fatty acid production. Possesses both acetoacetyl-ACP synthase and acetyl transacylase activities. Its substrate specificity determines the biosynthesis of branched-chain and/or straight-chain of fatty acids. The polypeptide is Beta-ketoacyl-[acyl-carrier-protein] synthase III (Bradyrhizobium sp. (strain BTAi1 / ATCC BAA-1182)).